The following is a 351-amino-acid chain: Nicotinate-nucleotide--dimethylbenzimidazole phosphoribosyltransferase (351 aa).

Catalysis depends on glutamate 318, which acts as the Proton acceptor.

The protein belongs to the CobT family.

The catalysed reaction is 5,6-dimethylbenzimidazole + nicotinate beta-D-ribonucleotide = alpha-ribazole 5'-phosphate + nicotinate + H(+). It participates in nucleoside biosynthesis; alpha-ribazole biosynthesis; alpha-ribazole from 5,6-dimethylbenzimidazole: step 1/2. In terms of biological role, catalyzes the synthesis of alpha-ribazole-5'-phosphate from nicotinate mononucleotide (NAMN) and 5,6-dimethylbenzimidazole (DMB). The protein is Nicotinate-nucleotide--dimethylbenzimidazole phosphoribosyltransferase of Shewanella frigidimarina (strain NCIMB 400).